The following is a 335-amino-acid chain: Biotin synthase (335 aa).

The Radical SAM core domain maps to 53–276 (VEIEGIVSVK…RTILRFAGGR (224 aa)). [4Fe-4S] cluster is bound by residues cysteine 66, cysteine 70, and cysteine 73. Positions 109, 142, 201, and 271 each coordinate [2Fe-2S] cluster.

This sequence belongs to the radical SAM superfamily. Biotin synthase family. As to quaternary structure, homodimer. The cofactor is [4Fe-4S] cluster. [2Fe-2S] cluster is required as a cofactor.

The catalysed reaction is (4R,5S)-dethiobiotin + (sulfur carrier)-SH + 2 reduced [2Fe-2S]-[ferredoxin] + 2 S-adenosyl-L-methionine = (sulfur carrier)-H + biotin + 2 5'-deoxyadenosine + 2 L-methionine + 2 oxidized [2Fe-2S]-[ferredoxin]. It participates in cofactor biosynthesis; biotin biosynthesis; biotin from 7,8-diaminononanoate: step 2/2. Catalyzes the conversion of dethiobiotin (DTB) to biotin by the insertion of a sulfur atom into dethiobiotin via a radical-based mechanism. This is Biotin synthase from Acidothermus cellulolyticus (strain ATCC 43068 / DSM 8971 / 11B).